The chain runs to 120 residues: Large ribosomal subunit protein uL18 (120 aa).

The protein belongs to the universal ribosomal protein uL18 family. As to quaternary structure, part of the 50S ribosomal subunit; part of the 5S rRNA/L5/L18/L25 subcomplex. Contacts the 5S and 23S rRNAs.

This is one of the proteins that bind and probably mediate the attachment of the 5S RNA into the large ribosomal subunit, where it forms part of the central protuberance. The polypeptide is Large ribosomal subunit protein uL18 (Geobacillus kaustophilus (strain HTA426)).